The chain runs to 209 residues: ATP-dependent Clp protease proteolytic subunit (209 aa).

The Nucleophile role is filled by S106. The active site involves H131.

It belongs to the peptidase S14 family. As to quaternary structure, fourteen ClpP subunits assemble into 2 heptameric rings which stack back to back to give a disk-like structure with a central cavity, resembling the structure of eukaryotic proteasomes.

It is found in the cytoplasm. The enzyme catalyses Hydrolysis of proteins to small peptides in the presence of ATP and magnesium. alpha-casein is the usual test substrate. In the absence of ATP, only oligopeptides shorter than five residues are hydrolyzed (such as succinyl-Leu-Tyr-|-NHMec, and Leu-Tyr-Leu-|-Tyr-Trp, in which cleavage of the -Tyr-|-Leu- and -Tyr-|-Trp bonds also occurs).. Cleaves peptides in various proteins in a process that requires ATP hydrolysis. Has a chymotrypsin-like activity. Plays a major role in the degradation of misfolded proteins. This is ATP-dependent Clp protease proteolytic subunit from Brucella melitensis biotype 2 (strain ATCC 23457).